We begin with the raw amino-acid sequence, 607 residues long: UvrABC system protein C (607 aa).

The 79-residue stretch at 16-94 (GRPGVYRMFD…IKEWRPPYNI (79 aa)) folds into the GIY-YIG domain. In terms of domain architecture, UVR spans 203–238 (QQLGNELNAEMEKAAMALDFEKAAELRDQIALLRRV).

Belongs to the UvrC family. As to quaternary structure, interacts with UvrB in an incision complex.

The protein resides in the cytoplasm. The UvrABC repair system catalyzes the recognition and processing of DNA lesions. UvrC both incises the 5' and 3' sides of the lesion. The N-terminal half is responsible for the 3' incision and the C-terminal half is responsible for the 5' incision. This Pseudomonas putida (strain ATCC 47054 / DSM 6125 / CFBP 8728 / NCIMB 11950 / KT2440) protein is UvrABC system protein C.